The sequence spans 331 residues: Cathepsin S (331 aa).

Residues 1 to 16 (MKRLVCVLLVCSSAVA) form the signal peptide. The propeptide at 17–114 (QLHKDPTLDH…ITYKSNPNRI (98 aa)) is activation peptide. An N-linked (GlcNAc...) asparagine glycan is attached at N104. Cystine bridges form between C126–C224, C136–C180, C170–C213, and C272–C320. Residue C139 is part of the active site. Residues H278 and N298 contribute to the active site.

It belongs to the peptidase C1 family. In terms of assembly, monomer.

Its subcellular location is the lysosome. The protein resides in the secreted. It localises to the cytoplasmic vesicle. The protein localises to the phagosome. It catalyses the reaction Similar to cathepsin L, but with much less activity on Z-Phe-Arg-|-NHMec, and more activity on the Z-Val-Val-Arg-|-Xaa compound.. Its function is as follows. Thiol protease. Key protease responsible for the removal of the invariant chain from MHC class II molecules and MHC class II antigen presentation. The bond-specificity of this proteinase is in part similar to the specificities of cathepsin L. The sequence is that of Cathepsin S (CTSS) from Homo sapiens (Human).